The sequence spans 185 residues: UPF0149 protein PFL_5969 (185 aa).

This sequence belongs to the UPF0149 family.

This chain is UPF0149 protein PFL_5969, found in Pseudomonas fluorescens (strain ATCC BAA-477 / NRRL B-23932 / Pf-5).